Here is a 438-residue protein sequence, read N- to C-terminus: SPbeta prophage-derived uncharacterized protein YopA (438 aa).

The chain crosses the membrane as a helical span at residues 391 to 411; it reads LHVLYLGVWYLELLTLGILGY.

It localises to the cell membrane. This is SPbeta prophage-derived uncharacterized protein YopA (yopA) from Bacillus subtilis (strain 168).